A 290-amino-acid chain; its full sequence is Light-independent protochlorophyllide reductase iron-sulfur ATP-binding protein (290 aa).

ATP contacts are provided by residues 10–15 (GIGKST) and Lys39. Ser14 contacts Mg(2+). The [4Fe-4S] cluster site is built by Cys95 and Cys129. 180–181 (NR) contacts ATP.

This sequence belongs to the NifH/BchL/ChlL family. As to quaternary structure, homodimer. Protochlorophyllide reductase is composed of three subunits; ChlL, ChlN and ChlB. [4Fe-4S] cluster serves as cofactor.

It is found in the plastid. The protein resides in the chloroplast. It catalyses the reaction chlorophyllide a + oxidized 2[4Fe-4S]-[ferredoxin] + 2 ADP + 2 phosphate = protochlorophyllide a + reduced 2[4Fe-4S]-[ferredoxin] + 2 ATP + 2 H2O. It participates in porphyrin-containing compound metabolism; chlorophyll biosynthesis (light-independent). Its function is as follows. Component of the dark-operative protochlorophyllide reductase (DPOR) that uses Mg-ATP and reduced ferredoxin to reduce ring D of protochlorophyllide (Pchlide) to form chlorophyllide a (Chlide). This reaction is light-independent. The L component serves as a unique electron donor to the NB-component of the complex, and binds Mg-ATP. This chain is Light-independent protochlorophyllide reductase iron-sulfur ATP-binding protein, found in Porphyra purpurea (Red seaweed).